A 369-amino-acid polypeptide reads, in one-letter code: Replication factor C subunit 5 (369 aa).

Positions 21 to 40 (INKGKDVVGFGPPPQSKATP) are disordered. Position 79-86 (79-86 (GPPGTGKT)) interacts with ATP.

Belongs to the activator 1 small subunits family. In terms of assembly, heterotetramer of subunits RFC2, RFC3, RFC4 and RFC5 that can form a complex with RFC1.

It localises to the nucleus. Functionally, functions in cell replication and proliferation. May be involved in chromatin assembly and remodeling. Plays a role in the negative control of pathogenesis-related gene expression and systemic acquired resistance (SAR). In Arabidopsis thaliana (Mouse-ear cress), this protein is Replication factor C subunit 5 (RFC5).